A 699-amino-acid polypeptide reads, in one-letter code: Methylcrotonoyl-CoA carboxylase subunit alpha, mitochondrial (699 aa).

A Biotin carboxylation domain is found at 30-475; sequence ITKILIANRG…ETGFIPIHRE (446 aa). The ATP site is built by Lys-144, Glu-228, and His-263. Residues 148–345 form the ATP-grasp domain; the sequence is KDIMIKAGVP…LVEWQLKVAE (198 aa). Arg-320 is an active-site residue. Residues 624–699 enclose the Biotinyl-binding domain; it reads KGADGVLGSL…EDKKTLAVIV (76 aa). Position 665 is an N6-biotinyllysine (Lys-665).

In terms of assembly, probably a dodecamer composed of six biotin-containing alpha subunits and six beta subunits. Mn(2+) serves as cofactor. It depends on biotin as a cofactor.

Its subcellular location is the mitochondrion matrix. It catalyses the reaction 3-methylbut-2-enoyl-CoA + hydrogencarbonate + ATP = 3-methyl-(2E)-glutaconyl-CoA + ADP + phosphate + H(+). The protein operates within amino-acid degradation; L-leucine degradation; (S)-3-hydroxy-3-methylglutaryl-CoA from 3-isovaleryl-CoA: step 2/3. Its function is as follows. Biotin-attachment subunit of the 3-methylcrotonyl-CoA carboxylase, an enzyme that catalyzes the conversion of 3-methylcrotonyl-CoA to 3-methylglutaconyl-CoA, a critical step for leucine and isovaleric acid catabolism. In Dictyostelium discoideum (Social amoeba), this protein is Methylcrotonoyl-CoA carboxylase subunit alpha, mitochondrial (mccA).